The following is a 122-amino-acid chain: Elsinochromes biosynthesis cluster protein HP4 (122 aa).

In terms of biological role, part of the gene cluster that mediates the biosynthesis of elsinochromes, pigments consisting of at least four interconvertible tautomers (A, B, C and D) that have a core phenolic quinone to which various side chains are attached and which play an important role in fungal pathogenesis. The non-reducing polyketide synthase PKS1 was proposed to iteratively catalyze decarboxylation between acetyl-CoA and malonyl-CoA subunits for polyketide chain elongation. The released polyketide undergoes cyclization to form an aromatic ring, and proceeds via serial modification steps to produce the heptaketide back- bone of elsinochrome. As elsinochrome has a symmetrical structure, two identical heptaketides are fused to form a core 1,2-dihydrobenzo-perylene ring structure, which can then be successively modified to produce the various derivatives of elsinochrome. Some of these reactions may be cooperatively carried out, at least in part, by the products of RDT1, OXR1 and PKS1. PRF1, embedded within the elsinochrome cluster possibly functions to stabilize some of the biosynthetic enzymes required for elsinochrome production. As prefoldin is a hexamer containing 2 a and 4 b subunits, additional prefoldin subunits, whose coding genes may not immediately link to the elsinochrome biosynthetic gene cluster, are required to fulfill the chaperone function. In addition, no methyltransferase-coding gene exists within the biosynthetic gene cluster, even though elsinochrome has four methyl groups at positions C3, C7, C8 and C12. Apparently, the identified gene cluster does not contain the entire entourage of genes responsible for elsinochrome biosynthesis. Once elsinochrome is synthesized, it must be exported outside the fungal cells, which is probably accomplished by the ECT1 transporter, to avoid toxicity. The sequence is that of Elsinochromes biosynthesis cluster protein HP4 from Elsinoe fawcettii (Citrus scab fungus).